The sequence spans 227 residues: N-(5'-phosphoribosyl)anthranilate isomerase (227 aa).

The protein belongs to the TrpF family.

The catalysed reaction is N-(5-phospho-beta-D-ribosyl)anthranilate = 1-(2-carboxyphenylamino)-1-deoxy-D-ribulose 5-phosphate. It participates in amino-acid biosynthesis; L-tryptophan biosynthesis; L-tryptophan from chorismate: step 3/5. This chain is N-(5'-phosphoribosyl)anthranilate isomerase, found in Herminiimonas arsenicoxydans.